A 397-amino-acid polypeptide reads, in one-letter code: Dimethyladenosine transferase 2, mitochondrial (397 aa).

A mitochondrion-targeting transit peptide spans Met1–Phe44. Ile75, Glu124, and Asp150 together coordinate S-adenosyl-L-methionine. The interval Lys329 to Arg330 is DNA-binding.

It belongs to the class I-like SAM-binding methyltransferase superfamily. rRNA adenine N(6)-methyltransferase family. KsgA subfamily. Homodimer. Component of the mitochondrial transcription initiation complex, composed at least of TFB2M, TFAM and POLRMT. In this complex TFAM recruits POLRMT to the promoter whereas TFB2M induces structural changes in POLRMT to enable promoter opening and trapping of the DNA non-template strand. Interacts with mitochondrial RNA polymerase POLRMT. Interacts with TFAM.

It is found in the mitochondrion. It carries out the reaction adenosine in rRNA + S-adenosyl-L-methionine = N(6)-methyladenosine in rRNA + S-adenosyl-L-homocysteine + H(+). In terms of biological role, S-adenosyl-L-methionine-dependent rRNA methyltransferase which may methylate two specific adjacent adenosines in the loop of a conserved hairpin near the 3'-end of 12S mitochondrial rRNA. Component of the mitochondrial transcription initiation complex, composed at least of TFB2M, TFAM and POLRMT that is required for basal transcription of mitochondrial DNA. In this complex TFAM recruits POLRMT to a specific promoter whereas TFB2M induces structural changes in POLRMT to enable promoter opening and trapping of the DNA non-template strand. Stimulates transcription independently of the methyltransferase activity. The protein is Dimethyladenosine transferase 2, mitochondrial of Rattus norvegicus (Rat).